The chain runs to 686 residues: XK-related protein 5 (686 aa).

The next 5 helical transmembrane spans lie at 33-53 (LLWG…QALS), 205-225 (HFWV…WLVA), 239-259 (LFNL…WDSP), 265-285 (VTFY…ATDF), and 297-317 (IAGV…YYSL). Disordered regions lie at residues 339-387 (GDKT…PPEA), 448-468 (ALSA…LENS), and 490-592 (FASD…APFP). A compositionally biased stretch (basic and acidic residues) spans 340 to 359 (DKTERRDSPRATDLAGKRTE). Polar residues-rich tracts occupy residues 450–468 (SAQQ…LENS) and 490–509 (FASD…TQGE). Over residues 523 to 536 (QGKGTGGQQRGGEG) the composition is skewed to gly residues. Positions 550–567 (VATSSQQEGSPATLQTAH) are enriched in polar residues.

This sequence belongs to the XK family.

It localises to the cell membrane. The protein is XK-related protein 5 of Homo sapiens (Human).